The sequence spans 791 residues: MDIFSEFLNCLSSDGTLNESSIYKTYQILESLNPKDVDTKENYIKLSNTFSTLGSGVGFQDNLLIEMFKILTVLFFKTRSTDLGDLLIESFTSLEIEKLMRVKKTIGSIVLTKGIQELQEIELPKVGFNCMTYDESIFQGISLERLILQLMSIFIAKCEENKLWLVNNRKDLDLRVIGQRLLHRDFACRFLSGLFISRFSVSGDTDESKHQNGIRLQLFIDFSKFETRLTMQILKADRIFSTCVANTVHAYEGLFSSGSNIDSTIATLVLEPRDLIVYRKGFALLQIPWTSVTTIDKIKKVKSLKIITEVSSLDEFVFQCKDGDKFDELFSTSEEIMNKLLPAIIVSPKLTLRNRSIIQIKEGESKLPNTSKQASQNLPHLDDELAYQRFEDQVIDKSVCDDECTNTENTPSSNIPADVKDSLSADDYAYDTKRKTQIEDLEEDQNKSKIASKDGTNLKEINSVPEFSDENVINQTGPAKKTPVQRRKDGKFAKSTKRKKQKSLKPDTENQESSVKNKKAKSNVNLQYSPKTPICKINDETLKPPTIANIAGHKQMNHLTSENIETPVPVPNGNWYNGVKHETATDIFTTCHDGNNSLKSSVWKELLKEKHWKQESKPQLTGNSRQIDLSTFVKQANTPNITSLLDGTCSSPPNNECFNDKEPDSSSSTLISDRQELEYRNPNAETVKLEEIPYNKFFKTVEKNEAYNPSSKSATIDGLQRYTSMIGNQIYEGILQNEKELRSKLEAYHINCNKVIKEFSKRQTARYKIIEKELAQIEVNLVSQIDSLMFK.

2 disordered regions span residues 462 to 523 and 644 to 672; these read NSVP…AKSN and LLDG…TLIS. Positions 485–492 match the Nuclear localization signal motif; the sequence is QRRKDGKF. Residues 493–503 show a composition bias toward basic residues; the sequence is AKSTKRKKQKS. Positions 644 to 657 are enriched in polar residues; the sequence is LLDGTCSSPPNNEC.

In terms of assembly, component of linear elements (LinEs), which are similar to synaptonemal complexes, at least composed of rec27, rec25, rec10 and mug20. Interacts with rec25; the interaction is direct. Interacts with hop1 (via N-terminus); the interaction is direct. Interacts with rec15 (via C-terminus); the interaction is direct.

The protein localises to the nucleus. The protein resides in the chromosome. In terms of biological role, organizes linear element components on chromosomes and is thus required for meiotic DNA recombination. This is Linear element protein rec10 from Schizosaccharomyces pombe (strain 972 / ATCC 24843) (Fission yeast).